Reading from the N-terminus, the 176-residue chain is Peptide methionine sulfoxide reductase B3 (176 aa).

An N-terminal signal peptide occupies residues 1-26 (MNIVNSKILFLSFTLLLLLQSSIVES). A MsrB domain is found at 51 to 172 (DEEWRAILSP…NSVSLKFTPA (122 aa)). Cys-90, Cys-93, Cys-136, and Cys-139 together coordinate Zn(2+). The cysteines at positions 108 and 161 are disulfide-linked. Residue Cys-161 is the Nucleophile of the active site.

It belongs to the MsrB Met sulfoxide reductase family. Requires Zn(2+) as cofactor.

It localises to the endoplasmic reticulum. It carries out the reaction L-methionyl-[protein] + [thioredoxin]-disulfide + H2O = L-methionyl-(R)-S-oxide-[protein] + [thioredoxin]-dithiol. Functionally, catalyzes the reduction of methionine sulfoxide (MetSO) to methionine in proteins. Plays a protective role against oxidative stress by restoring activity to proteins that have been inactivated by methionine oxidation. Involved in cold tolerance. Eliminates MetSO and reactive oxygen species that accumulate at the ER during cold acclimation. MSRB family specifically reduces the MetSO R-enantiomer. The chain is Peptide methionine sulfoxide reductase B3 (MSRB3) from Arabidopsis thaliana (Mouse-ear cress).